Here is a 278-residue protein sequence, read N- to C-terminus: Tryptophan synthase alpha chain (278 aa).

Active-site proton acceptor residues include E50 and D61.

Belongs to the TrpA family. As to quaternary structure, tetramer of two alpha and two beta chains.

It catalyses the reaction (1S,2R)-1-C-(indol-3-yl)glycerol 3-phosphate + L-serine = D-glyceraldehyde 3-phosphate + L-tryptophan + H2O. Its pathway is amino-acid biosynthesis; L-tryptophan biosynthesis; L-tryptophan from chorismate: step 5/5. Its function is as follows. The alpha subunit is responsible for the aldol cleavage of indoleglycerol phosphate to indole and glyceraldehyde 3-phosphate. The polypeptide is Tryptophan synthase alpha chain (Afipia carboxidovorans (strain ATCC 49405 / DSM 1227 / KCTC 32145 / OM5) (Oligotropha carboxidovorans)).